Consider the following 282-residue polypeptide: NADPH-dependent 7-cyano-7-deazaguanine reductase (282 aa).

88 to 90 (IES) is a binding site for substrate. 90 to 91 (SK) is an NADPH binding site. The active-site Thioimide intermediate is Cys190. Catalysis depends on Asp197, which acts as the Proton donor. Substrate is bound at residue 229-230 (HE). 258–259 (RG) contacts NADPH.

Belongs to the GTP cyclohydrolase I family. QueF type 2 subfamily. In terms of assembly, homodimer.

It localises to the cytoplasm. It carries out the reaction 7-aminomethyl-7-carbaguanine + 2 NADP(+) = 7-cyano-7-deazaguanine + 2 NADPH + 3 H(+). It participates in tRNA modification; tRNA-queuosine biosynthesis. Catalyzes the NADPH-dependent reduction of 7-cyano-7-deazaguanine (preQ0) to 7-aminomethyl-7-deazaguanine (preQ1). This chain is NADPH-dependent 7-cyano-7-deazaguanine reductase, found in Escherichia coli O17:K52:H18 (strain UMN026 / ExPEC).